A 119-amino-acid polypeptide reads, in one-letter code: UPF0738 protein BAA_1286 (119 aa).

This sequence belongs to the UPF0738 family.

The protein is UPF0738 protein BAA_1286 of Bacillus anthracis (strain A0248).